The primary structure comprises 2253 residues: Protein Ycf2 (2253 aa).

1600 to 1607 (GFIGTGRS) provides a ligand contact to ATP.

Belongs to the Ycf2 family.

It is found in the plastid. Its subcellular location is the chloroplast stroma. Probable ATPase of unknown function. Its presence in a non-photosynthetic plant (Epifagus virginiana) and experiments in tobacco indicate that it has an essential function which is probably not related to photosynthesis. The protein is Protein Ycf2 of Nymphaea alba (White water-lily).